Reading from the N-terminus, the 280-residue chain is Phosphatidylglycerol--prolipoprotein diacylglyceryl transferase (280 aa).

3 helical membrane-spanning segments follow: residues 15 to 35 (IFSI…IFAL), 60 to 80 (FIGL…PVFF), and 90 to 110 (IWEG…VLLF). Arginine 138 lines the a 1,2-diacyl-sn-glycero-3-phospho-(1'-sn-glycerol) pocket. Helical transmembrane passes span 217-237 (MPFG…RIFL) and 257-277 (GQLL…NIYV).

This sequence belongs to the Lgt family.

It is found in the cell membrane. The enzyme catalyses L-cysteinyl-[prolipoprotein] + a 1,2-diacyl-sn-glycero-3-phospho-(1'-sn-glycerol) = an S-1,2-diacyl-sn-glyceryl-L-cysteinyl-[prolipoprotein] + sn-glycerol 1-phosphate + H(+). It functions in the pathway protein modification; lipoprotein biosynthesis (diacylglyceryl transfer). Functionally, catalyzes the transfer of the diacylglyceryl group from phosphatidylglycerol to the sulfhydryl group of the N-terminal cysteine of a prolipoprotein, the first step in the formation of mature lipoproteins. The sequence is that of Phosphatidylglycerol--prolipoprotein diacylglyceryl transferase from Buchnera aphidicola subsp. Baizongia pistaciae (strain Bp).